The chain runs to 76 residues: Conotoxin Bu28 (76 aa).

The first 24 residues, 1–24, serve as a signal peptide directing secretion; that stretch reads MTSVQSATCCCLLWLVLCVQLVTP. A propeptide spanning residues 25–39 is cleaved from the precursor; sequence DSPATAQLSRHLTAR. 2 cysteine pairs are disulfide-bonded: Cys50–Cys63 and Cys54–Cys65. An Arginine amide modification is found at Arg69. A propeptide spanning residues 71–76 is cleaved from the precursor; that stretch reads VVSSSI.

Belongs to the conotoxin J superfamily. Expressed by the venom duct.

It localises to the secreted. In terms of biological role, highly inhibits both nicotinic acetylcholine receptors (neuronal (alpha-3/beta-4) and muscular (alpha-1/beta-1/epsilon/delta) subtypes) and the voltage-gated potassium channel Kv1.6/KCNA6 subtype. This Conus bullatus (Bubble cone) protein is Conotoxin Bu28.